Reading from the N-terminus, the 495-residue chain is Acetyl-coenzyme A carboxylase carboxyl transferase subunit beta, chloroplastic (495 aa).

Residues S188–L208 form a disordered region. Residues L226–K495 form the CoA carboxyltransferase N-terminal domain. Residues C230, C233, C249, and C252 each contribute to the Zn(2+) site. The C4-type zinc-finger motif lies at C230–C252.

This sequence belongs to the AccD/PCCB family. Acetyl-CoA carboxylase is a heterohexamer composed of biotin carboxyl carrier protein, biotin carboxylase and 2 subunits each of ACCase subunit alpha and ACCase plastid-coded subunit beta (accD). It depends on Zn(2+) as a cofactor.

It is found in the plastid. The protein resides in the chloroplast stroma. The catalysed reaction is N(6)-carboxybiotinyl-L-lysyl-[protein] + acetyl-CoA = N(6)-biotinyl-L-lysyl-[protein] + malonyl-CoA. The protein operates within lipid metabolism; malonyl-CoA biosynthesis; malonyl-CoA from acetyl-CoA: step 1/1. In terms of biological role, component of the acetyl coenzyme A carboxylase (ACC) complex. Biotin carboxylase (BC) catalyzes the carboxylation of biotin on its carrier protein (BCCP) and then the CO(2) group is transferred by the transcarboxylase to acetyl-CoA to form malonyl-CoA. This chain is Acetyl-coenzyme A carboxylase carboxyl transferase subunit beta, chloroplastic, found in Nicotiana tomentosiformis (Tobacco).